The chain runs to 390 residues: S-adenosylmethionine synthase 3 (390 aa).

Glu9 is a binding site for Mg(2+). His15 provides a ligand contact to ATP. Glu43 lines the K(+) pocket. The L-methionine site is built by Glu56 and Gln99. ATP-binding positions include 167–169, 235–238, Asp246, 252–253, Ala269, Lys273, and Lys277; these read DGK, SGRF, and RK. Asp246 lines the L-methionine pocket. Lys277 serves as a coordination point for L-methionine.

It belongs to the AdoMet synthase family. In terms of assembly, homotetramer. The cofactor is Mn(2+). It depends on Mg(2+) as a cofactor. Co(2+) serves as cofactor. K(+) is required as a cofactor. Requires NH4(+) as cofactor. As to expression, mostly expressed in roots, and, to a lower extent, in hypocotyls and cotyledons.

The protein localises to the cytoplasm. The enzyme catalyses L-methionine + ATP + H2O = S-adenosyl-L-methionine + phosphate + diphosphate. It participates in amino-acid biosynthesis; S-adenosyl-L-methionine biosynthesis; S-adenosyl-L-methionine from L-methionine: step 1/1. With respect to regulation, inhibited by products of SAMS reaction (SAM, Pi, PPi), substrate analogs (cycloleucine and ethionine), and alternative nucleotides (GTP, CTP and ADP). Strongly repressed by PPPi. Catalyzes the formation of S-adenosylmethionine from methionine and ATP. The reaction comprises two steps that are both catalyzed by the same enzyme: formation of S-adenosylmethionine (AdoMet) and triphosphate, and subsequent hydrolysis of the triphosphate. This Catharanthus roseus (Madagascar periwinkle) protein is S-adenosylmethionine synthase 3 (SAMS3).